The following is a 322-amino-acid chain: HPr kinase/phosphorylase (322 aa).

Catalysis depends on residues H146 and K167. Residue 161–168 coordinates ATP; the sequence is GDSGLGKS. Position 168 (S168) interacts with Mg(2+). D185 serves as the catalytic Proton acceptor; for phosphorylation activity. Proton donor; for dephosphorylation activity. The tract at residues 209 to 218 is important for the catalytic mechanism of both phosphorylation and dephosphorylation; the sequence is LEVRGLGLLD. E210 contributes to the Mg(2+) binding site. Residue R250 is part of the active site. The important for the catalytic mechanism of dephosphorylation stretch occupies residues 271 to 276; the sequence is QVAAGR.

The protein belongs to the HPrK/P family. In terms of assembly, homohexamer. It depends on Mg(2+) as a cofactor.

The enzyme catalyses [HPr protein]-L-serine + ATP = [HPr protein]-O-phospho-L-serine + ADP + H(+). It catalyses the reaction [HPr protein]-O-phospho-L-serine + phosphate + H(+) = [HPr protein]-L-serine + diphosphate. Functionally, catalyzes the ATP- as well as the pyrophosphate-dependent phosphorylation of a specific serine residue in HPr, a phosphocarrier protein of the phosphoenolpyruvate-dependent sugar phosphotransferase system (PTS). HprK/P also catalyzes the pyrophosphate-producing, inorganic phosphate-dependent dephosphorylation (phosphorolysis) of seryl-phosphorylated HPr (P-Ser-HPr). The protein is HPr kinase/phosphorylase of Burkholderia cenocepacia (strain HI2424).